A 977-amino-acid chain; its full sequence is Mineralocorticoid receptor (977 aa).

Residues 1 to 19 (METKGYHSRPEGLDMERRW) show a composition bias toward basic and acidic residues. Disordered regions lie at residues 1–37 (METK…AERT) and 231–288 (QGTP…VSSP). Residues 1–601 (METKGYHSRP…STGSSRPSKI (601 aa)) form a modulating region. Positions 231 to 243 (QGTPLTCSPTVDN) are enriched in polar residues. Residues Ser-250, Ser-259, Ser-283, Ser-287, and Ser-299 each carry the phosphoserine modification. Residues 259 to 288 (SPLSSPLSSMKSPISSPPSHCSVKSPVSSP) show a composition bias toward low complexity. Disordered stretches follow at residues 305-327 (NSRC…SPAA) and 344-368 (SGAS…KGAH). Positions 602, 605, 619, 622, 638, 644, 654, and 657 each coordinate Zn(2+). 2 consecutive NR C4-type zinc fingers follow at residues 602–622 (CLVC…CGSC) and 638–662 (CAGR…LQKC). Positions 602–667 (CLVCGDGASG…RLQKCLQAGM (66 aa)) form a DNA-binding region, nuclear receptor. Residues 668 to 718 (NLGARKSKKLGKLKGLHEEQPQQPPPPQSPEEGTTYIAPAKEPSVNTALVP) are hinge. The disordered stretch occupies residues 682–703 (GLHEEQPQQPPPPQSPEEGTTY). The NR LBD domain occupies 719–957 (QLSSISRALT…EFPAMLVEII (239 aa)). 21-hydroxyprogesterone is bound by residues Asn-763 and Gln-769. The aldosterone site is built by Asn-763 and Gln-769. 2 residues coordinate progesterone: Asn-763 and Gln-769. Positions 775–778 (KWAK) are important for coactivator binding. 2 residues coordinate 21-hydroxyprogesterone: Arg-810 and Thr-938. 2 residues coordinate aldosterone: Arg-810 and Thr-938. Progesterone is bound by residues Arg-810 and Thr-938.

It belongs to the nuclear hormone receptor family. NR3 subfamily.

It is found in the cytoplasm. The protein localises to the nucleus. Receptor for both mineralocorticoids (MC) such as aldosterone and glucocorticoids (GC) such as corticosterone or cortisol. Binds to mineralocorticoid response elements (MRE) and transactivates target genes. The effect of MC is to increase ion and water transport and thus raise extracellular fluid volume and blood pressure and lower potassium levels. This Tupaia belangeri (Common tree shrew) protein is Mineralocorticoid receptor (NR3C2).